The chain runs to 1978 residues: Centrosomal protein Cep290 (1978 aa).

Residues 1–650 (MSMDIPETVS…SLCEVPEIAE (650 aa)) form a necessary and sufficient for function in ciliogenesis, transition zone (TZ) assembly, and recruitment of DZP1 and Mks1 to the TZ. Also required for subcellular localization to the cilium basal body region. 2 coiled-coil regions span residues 76 to 384 (DRRL…KSQQ) and 471 to 505 (IERLTLKLRTSEELRLQLKLEKSELRRKLLELQQD). A disordered region spans residues 271-296 (QLEGKSISSGQTNSSNSQSQQEEEHA). Positions 276 to 290 (SISSGQTNSSNSQSQ) are enriched in low complexity. A disordered region spans residues 663–688 (ATRPSSPTEATMGLRRPTVPDPEEKP). Coiled-coil stretches lie at residues 853–887 (FEEQQQELLTWRSKQAELQRETKQLEGLLHVANEQ), 922–970 (LAKV…TQQD), and 1192–1233 (ADAV…SRSE). The segment covering 1313 to 1324 (KEKLRQKPEVPV) has biased composition (basic and acidic residues). The segment at 1313 to 1397 (KEKLRQKPEV…EKQDTEELKE (85 aa)) is disordered. Low complexity predominate over residues 1329-1341 (STDSRSSSSSDSS). Residues 1379–1391 (VTEEPEGEEEKQD) are compositionally biased toward acidic residues. Coiled-coil stretches lie at residues 1405 to 1439 (IKDLKDKLEYSERSLKTREEEVDILKEKLKLCQER) and 1501 to 1654 (LNRT…LESK). Disordered regions lie at residues 1684-1714 (VGVSKFAPSPSESPETYTGPSSECSSPAHHH) and 1859-1884 (LKDGRRSTESRSSMDSTPAEAARLQQ). The span at 1693–1708 (PSESPETYTGPSSECS) shows a compositional bias: polar residues. Residues 1726–1935 (IEALKSRIEL…KEQLVKKTQL (210 aa)) are a coiled coil.

In terms of assembly, interacts (via N-terminus) with DZIP1. Expressed in sensory neurons type I and in germ cells (at protein level).

The protein localises to the cytoplasm. It is found in the cytoskeleton. The protein resides in the cilium basal body. It localises to the microtubule organizing center. Its subcellular location is the centrosome. The protein localises to the centriole. Essential for ciliogenesis in sensory neurons and spermatocytes. During neuron and spermatocyte ciliogenesis, essential for initiating transition zone (TZ) assembly and is required for the formation of diverse connections between microtubules and between microtubules and the membrane. Regulates TZ assembly by recruiting DZIP1 to the plasma membrane where it promotes early ciliary membrane formation resulting in the initiation of TZ assembly. The protein is Centrosomal protein Cep290 of Drosophila melanogaster (Fruit fly).